A 194-amino-acid chain; its full sequence is Small ribosomal subunit protein eS7 (194 aa).

It belongs to the eukaryotic ribosomal protein eS7 family.

The chain is Small ribosomal subunit protein eS7 (RpS7) from Drosophila yakuba (Fruit fly).